Consider the following 122-residue polypeptide: Co-chaperonin GroES (122 aa).

The protein belongs to the GroES chaperonin family. Heptamer of 7 subunits arranged in a ring. Interacts with the chaperonin GroEL.

Its subcellular location is the cytoplasm. Functionally, together with the chaperonin GroEL, plays an essential role in assisting protein folding. The GroEL-GroES system forms a nano-cage that allows encapsulation of the non-native substrate proteins and provides a physical environment optimized to promote and accelerate protein folding. GroES binds to the apical surface of the GroEL ring, thereby capping the opening of the GroEL channel. The protein is Co-chaperonin GroES of Aquifex aeolicus (strain VF5).